The chain runs to 479 residues: Something about silencing protein 10 (479 aa).

Positions 1-10 are enriched in basic residues; sequence MVGRSRRRGA. 2 disordered regions span residues 1 to 45 and 62 to 166; these read MVGR…SYYQ and KGWN…EEAQ. The residue at position 8 (Arg8) is an Omega-N-methylarginine. Residues 11 to 21 are compositionally biased toward low complexity; that stretch reads AKWAAVRAKAG. Ser37 carries the phosphoserine modification. A compositionally biased stretch (acidic residues) spans 69 to 111; that stretch reads SGDEEDGEEEEEEVLALDMDDEDDEDGGNAGEEEEEENADDDG. N6-acetyllysine; alternate is present on Lys144. A Glycyl lysine isopeptide (Lys-Gly) (interchain with G-Cter in SUMO2); alternate cross-link involves residue Lys144. Phosphoserine is present on Ser150. Residues 153 to 165 show a composition bias toward acidic residues; sequence EAEEEEREEEEEA. Thr362 is modified (phosphothreonine). Ser365 and Ser368 each carry phosphoserine. Arg385 is subject to Citrulline. The disordered stretch occupies residues 419-466; sequence RGLTPRRKKIDRNPRVKHREKFRRAKIRRRGQVREVRKEEQRYSGELS. Residues 422-449 are compositionally biased toward basic residues; it reads TPRRKKIDRNPRVKHREKFRRAKIRRRG. The segment covering 450–461 has biased composition (basic and acidic residues); that stretch reads QVREVRKEEQRY.

It belongs to the SAS10 family. Part of the small subunit (SSU) processome, composed of more than 70 proteins and the RNA chaperone small nucleolar RNA (snoRNA) U3. In terms of processing, citrullinated by PADI4.

Its subcellular location is the nucleus. The protein localises to the nucleolus. Its function is as follows. Essential for gene silencing: has a role in the structure of silenced chromatin. Plays a role in the developing brain. Part of the small subunit (SSU) processome, first precursor of the small eukaryotic ribosomal subunit. During the assembly of the SSU processome in the nucleolus, many ribosome biogenesis factors, an RNA chaperone and ribosomal proteins associate with the nascent pre-rRNA and work in concert to generate RNA folding, modifications, rearrangements and cleavage as well as targeted degradation of pre-ribosomal RNA by the RNA exosome. The polypeptide is Something about silencing protein 10 (Homo sapiens (Human)).